A 120-amino-acid chain; its full sequence is Fumarate reductase subunit D (120 aa).

The next 3 helical transmembrane spans lie at 25 to 45 (FAMLTPVTILVLGIMVPLGIL), 57 to 77 (GFVTSFIGALFTIATLALPMW), and 100 to 120 (IACYATAFLVSALAIIFVFMI).

The protein belongs to the FrdD family. As to quaternary structure, part of an enzyme complex containing four subunits: a flavoprotein (FrdA), an iron-sulfur protein (FrdB), and two hydrophobic anchor proteins (FrdC and FrdD).

The protein localises to the cell inner membrane. Functionally, anchors the catalytic components of the fumarate reductase complex to the cell membrane, binds quinones. This chain is Fumarate reductase subunit D, found in Photobacterium profundum (strain SS9).